A 639-amino-acid polypeptide reads, in one-letter code: Probable serine/threonine-protein kinase DDB_G0282777 (639 aa).

Residues 7 to 122 (LKENKESLKD…EDLKSIILTS (116 aa)) adopt a coiled-coil conformation. Residues 233–588 (MHMVGDIKKG…SNNNQNHTNI (356 aa)) form the Protein kinase domain. ATP is bound by residues 239–247 (IKKGSISSD) and lysine 284. Aspartate 439 (proton acceptor) is an active-site residue. The tract at residues 601-639 (NTLETSTTNPNTNTTTSDTNTSTTSTTNTNTTTSNTITA) is disordered.

It belongs to the protein kinase superfamily. Ser/Thr protein kinase family.

It carries out the reaction L-seryl-[protein] + ATP = O-phospho-L-seryl-[protein] + ADP + H(+). It catalyses the reaction L-threonyl-[protein] + ATP = O-phospho-L-threonyl-[protein] + ADP + H(+). This is Probable serine/threonine-protein kinase DDB_G0282777 from Dictyostelium discoideum (Social amoeba).